The following is a 156-amino-acid chain: Phosphopantetheine adenylyltransferase (156 aa).

Threonine 10 contacts substrate. Residues threonine 10–phenylalanine 11 and histidine 18 contribute to the ATP site. Substrate contacts are provided by lysine 42, leucine 74, and arginine 88. ATP-binding positions include glycine 89–arginine 91, glutamate 99, and tryptophan 124–serine 130.

It belongs to the bacterial CoaD family. In terms of assembly, homohexamer. Mg(2+) serves as cofactor.

It is found in the cytoplasm. The catalysed reaction is (R)-4'-phosphopantetheine + ATP + H(+) = 3'-dephospho-CoA + diphosphate. Its pathway is cofactor biosynthesis; coenzyme A biosynthesis; CoA from (R)-pantothenate: step 4/5. Its function is as follows. Reversibly transfers an adenylyl group from ATP to 4'-phosphopantetheine, yielding dephospho-CoA (dPCoA) and pyrophosphate. The polypeptide is Phosphopantetheine adenylyltransferase (Hamiltonella defensa subsp. Acyrthosiphon pisum (strain 5AT)).